The chain runs to 131 residues: Fluoride-specific ion channel FluC 1 (131 aa).

4 consecutive transmembrane segments (helical) span residues 4–24 (LALPAWQASLVAIGAVPGAWL), 40–60 (HWGTFAVNMVAAFALGLVLAL), 73–93 (LILLIGVGFFGSLSTFSTFAV), and 108–128 (LVLAVGSILGGLLAVAAGVGL). Gly83 and Ser86 together coordinate Na(+).

This sequence belongs to the fluoride channel Fluc/FEX (TC 1.A.43) family.

It is found in the cell inner membrane. It catalyses the reaction fluoride(in) = fluoride(out). Its activity is regulated as follows. Na(+) is not transported, but it plays an essential structural role and its presence is essential for fluoride channel function. Functionally, fluoride-specific ion channel. Important for reducing fluoride concentration in the cell, thus reducing its toxicity. The protein is Fluoride-specific ion channel FluC 1 of Prochlorococcus marinus (strain MIT 9313).